A 488-amino-acid polypeptide reads, in one-letter code: Proline--tRNA ligase (488 aa).

Belongs to the class-II aminoacyl-tRNA synthetase family. ProS type 3 subfamily. As to quaternary structure, homodimer.

Its subcellular location is the cytoplasm. The catalysed reaction is tRNA(Pro) + L-proline + ATP = L-prolyl-tRNA(Pro) + AMP + diphosphate. Functionally, catalyzes the attachment of proline to tRNA(Pro) in a two-step reaction: proline is first activated by ATP to form Pro-AMP and then transferred to the acceptor end of tRNA(Pro). The polypeptide is Proline--tRNA ligase (Pyrobaculum aerophilum (strain ATCC 51768 / DSM 7523 / JCM 9630 / CIP 104966 / NBRC 100827 / IM2)).